The chain runs to 238 residues: Partner of Y14 and mago (238 aa).

The disordered stretch occupies residues 1-183 (MTTYATDSQG…GADGHSDLSK (183 aa)). Basic and acidic residues-rich tracts occupy residues 65-77 (QKAR…EQRK) and 123-133 (LEQKQKEEQKA). Low complexity predominate over residues 136 to 155 (RQQAQDQRNSKQQQSQNQSK). A coiled-coil region spans residues 176 to 233 (DGHSDLSKKLRKLRKKIREIEVIEERLRASDGPRPDKDQIEKAKRKAEILKEIEELER).

This sequence belongs to the pym family. In terms of assembly, interacts (via N-terminus) with mago and tsu/Y14; the interaction is direct.

It localises to the cytoplasm. The protein resides in the nucleus. Functionally, regulator of the exon junction complex (EJC), a multiprotein complex that associates immediately upstream of the exon-exon junction on mRNAs and serves as a positional landmarks for the intron exon structure of genes and directs post-transcriptional processes in the cytoplasm such as mRNA export, nonsense-mediated mRNA decay (NMD) or translation. The chain is Partner of Y14 and mago from Culex quinquefasciatus (Southern house mosquito).